A 718-amino-acid polypeptide reads, in one-letter code: Heat shock 70 kDa protein 6, chloroplastic (718 aa).

Residues 1–92 constitute a chloroplast transit peptide; that stretch reads MASSAAQIHV…IDLGTTNSAV (92 aa). Residues 671-718 form a disordered region; the sequence is QSLYNQPGAGGPGAGPSPGGEGASSGDSSSSKGGDGDDVIDADFTDSQ. Positions 678-693 are enriched in gly residues; that stretch reads GAGGPGAGPSPGGEGA. Residues 706 to 718 are compositionally biased toward acidic residues; sequence GDDVIDADFTDSQ.

It belongs to the heat shock protein 70 (TC 1.A.33) family. DnaK subfamily. In terms of assembly, interacts with geminivirus movement protein (MP).

The protein resides in the plastid. Its subcellular location is the chloroplast stroma. Acts redundantly with HSP70-7 in the thermotolerance of germinating seeds. Plays an important role in the protein precursor import into chloroplasts. Its function is as follows. In cooperation with other chaperones, Hsp70s are key components that facilitate folding of de novo synthesized proteins, assist translocation of precursor proteins into organelles, and are responsible for degradation of damaged protein under stress conditions. The protein is Heat shock 70 kDa protein 6, chloroplastic (HSP70-6) of Arabidopsis thaliana (Mouse-ear cress).